The chain runs to 564 residues: Dihydroxy-acid dehydratase (564 aa).

Cys-50 contributes to the [2Fe-2S] cluster binding site. Asp-82 contacts Mg(2+). [2Fe-2S] cluster is bound at residue Cys-123. Residues Asp-124 and Lys-125 each coordinate Mg(2+). Lys-125 carries the post-translational modification N6-carboxylysine. [2Fe-2S] cluster is bound at residue Cys-195. Glu-447 contacts Mg(2+). Catalysis depends on Ser-473, which acts as the Proton acceptor.

The protein belongs to the IlvD/Edd family. Homodimer. Requires [2Fe-2S] cluster as cofactor. Mg(2+) serves as cofactor.

It catalyses the reaction (2R)-2,3-dihydroxy-3-methylbutanoate = 3-methyl-2-oxobutanoate + H2O. The enzyme catalyses (2R,3R)-2,3-dihydroxy-3-methylpentanoate = (S)-3-methyl-2-oxopentanoate + H2O. The protein operates within amino-acid biosynthesis; L-isoleucine biosynthesis; L-isoleucine from 2-oxobutanoate: step 3/4. Its pathway is amino-acid biosynthesis; L-valine biosynthesis; L-valine from pyruvate: step 3/4. Functions in the biosynthesis of branched-chain amino acids. Catalyzes the dehydration of (2R,3R)-2,3-dihydroxy-3-methylpentanoate (2,3-dihydroxy-3-methylvalerate) into 2-oxo-3-methylpentanoate (2-oxo-3-methylvalerate) and of (2R)-2,3-dihydroxy-3-methylbutanoate (2,3-dihydroxyisovalerate) into 2-oxo-3-methylbutanoate (2-oxoisovalerate), the penultimate precursor to L-isoleucine and L-valine, respectively. The protein is Dihydroxy-acid dehydratase of Chloroflexus aggregans (strain MD-66 / DSM 9485).